Here is a 485-residue protein sequence, read N- to C-terminus: FAD-dependent monooxygenase elcH (485 aa).

The N-terminal stretch at 1-19 (MFTLRSLAILAVFAATALA) is a signal peptide. FAD is bound by residues Asp59 and Gly73. Residues Asn126, Asn147, and Asn157 are each glycosylated (N-linked (GlcNAc...) asparagine).

This sequence belongs to the paxM FAD-dependent monooxygenase family. FAD is required as a cofactor.

Its pathway is secondary metabolite biosynthesis. Functionally, FAD-dependent monooxygenase; part of the gene cluster that mediates the biosynthesis of elsinochrome C, a perelyenequinone phytotoxin structurally similar to cercosporin. The first step of elsinochrome C biosynthesis is performed by the polyketide synthase elcA which catalyzes the formation of nor-toralactone. The starter unit acyltransferase (SAT) domain of elcA initiates polyketide extension by the selective utilization of acetyl-CoA, which is elongated to the heptaketide in the beta-ketoacyl synthase (KS) domain by successive condensations with six malonyl units introduced by the malonyl acyltransferase (MAT) domain. The product template (PT) domain catalyzes C4-C9 and C2-C11 aldol cyclizations and dehydrations to a trihydroxynaphthalene, which is thought to be delivered to the thioesterase (TE) domain for product release. The bifunctional enzyme elcB then methylates nor-toralactone to toralactone before conducting an unusual oxidative aromatic ring opening. The next step in perylenequinone biosynthesis is an O-methylation at the nascent OH-6 of the elcB product performed by the O-methyltransferase elcD. The oxidative coupling of the two monomeric naphthol units in perylenequinone biosynthesis is catalyzed by the FAD-dependent monooxygenase elcE and the multicopper oxidase elcG. ElcG might catalyze the first intermolecular coupling in a regio- and stereo-selective manner via a phenol radical coupling mechanism and the elcE could forge the second C-C bond intramolecularly via a hydride transfer mechanism. The fasciclin domain-containing protein elcF might also play a role duting this step. The last piece of the puzzle in the biosynthesis of elsinochrome C is the additional annulation by enolate coupling to afford the dihydrobenzo(ghi)perylenequinone system, catalyzed by the FAD-dependent monooxygenase elcH. The sequence is that of FAD-dependent monooxygenase elcH from Phaeosphaeria nodorum (strain SN15 / ATCC MYA-4574 / FGSC 10173) (Glume blotch fungus).